Here is a 429-residue protein sequence, read N- to C-terminus: L-threonine dehydratase biosynthetic IlvA (429 aa).

Lys-66 bears the N6-(pyridoxal phosphate)lysine mark. Residues Asn-93, 196–200 (GGGGC), and Ser-322 each bind pyridoxal 5'-phosphate. Positions 346-420 (HYFLVDFPQE…TDIHVEALEP (75 aa)) constitute an ACT-like domain.

Belongs to the serine/threonine dehydratase family. As to quaternary structure, homotetramer. Pyridoxal 5'-phosphate serves as cofactor.

The catalysed reaction is L-threonine = 2-oxobutanoate + NH4(+). It functions in the pathway amino-acid biosynthesis; L-isoleucine biosynthesis; 2-oxobutanoate from L-threonine: step 1/1. Its function is as follows. Catalyzes the anaerobic formation of alpha-ketobutyrate and ammonia from threonine in a two-step reaction. The first step involved a dehydration of threonine and a production of enamine intermediates (aminocrotonate), which tautomerizes to its imine form (iminobutyrate). Both intermediates are unstable and short-lived. The second step is the nonenzymatic hydrolysis of the enamine/imine intermediates to form 2-ketobutyrate and free ammonia. In the low water environment of the cell, the second step is accelerated by RidA. The sequence is that of L-threonine dehydratase biosynthetic IlvA (ilvA) from Mycobacterium bovis (strain ATCC BAA-935 / AF2122/97).